The following is a 447-amino-acid chain: Phosphoglucosamine mutase (447 aa).

The active-site Phosphoserine intermediate is the Ser100. Ser100, Asp239, Asp241, and Asp243 together coordinate Mg(2+). The residue at position 100 (Ser100) is a Phosphoserine.

This sequence belongs to the phosphohexose mutase family. Mg(2+) is required as a cofactor. In terms of processing, activated by phosphorylation.

It catalyses the reaction alpha-D-glucosamine 1-phosphate = D-glucosamine 6-phosphate. Its function is as follows. Catalyzes the conversion of glucosamine-6-phosphate to glucosamine-1-phosphate. The chain is Phosphoglucosamine mutase from Halalkalibacterium halodurans (strain ATCC BAA-125 / DSM 18197 / FERM 7344 / JCM 9153 / C-125) (Bacillus halodurans).